Consider the following 294-residue polypeptide: Cytidine deaminase (294 aa).

CMP/dCMP-type deaminase domains are found at residues 48 to 168 (NDDE…FGPK) and 187 to 294 (DNTS…RVTL). 89–91 (NME) provides a ligand contact to substrate. A Zn(2+)-binding site is contributed by histidine 102. Glutamate 104 acts as the Proton donor in catalysis. Positions 129 and 132 each coordinate Zn(2+).

This sequence belongs to the cytidine and deoxycytidylate deaminase family. Homodimer. It depends on Zn(2+) as a cofactor.

It catalyses the reaction cytidine + H2O + H(+) = uridine + NH4(+). It carries out the reaction 2'-deoxycytidine + H2O + H(+) = 2'-deoxyuridine + NH4(+). Its function is as follows. This enzyme scavenges exogenous and endogenous cytidine and 2'-deoxycytidine for UMP synthesis. The chain is Cytidine deaminase from Proteus mirabilis (strain HI4320).